The primary structure comprises 273 residues: NAD-dependent protein deacetylase 2 (273 aa).

The Deacetylase sirtuin-type domain occupies 1 to 273; sequence MSNAPLANQS…RCEAALAFLL (273 aa). Residues 26–46 and 104–107 contribute to the NAD(+) site; these read GAGC…GNWK and QNVD. Residue His-122 is the Proton acceptor of the active site. Positions 130, 133, 181, and 184 each coordinate Zn(2+). NAD(+) contacts are provided by residues 221 to 223, 247 to 249, and Cys-265; these read GSS and NLG.

This sequence belongs to the sirtuin family. Class II subfamily. Zn(2+) serves as cofactor.

It is found in the cytoplasm. It carries out the reaction N(6)-acetyl-L-lysyl-[protein] + NAD(+) + H2O = 2''-O-acetyl-ADP-D-ribose + nicotinamide + L-lysyl-[protein]. NAD-dependent protein deacetylase which modulates the activities of several enzymes which are inactive in their acetylated form. This Bradyrhizobium diazoefficiens (strain JCM 10833 / BCRC 13528 / IAM 13628 / NBRC 14792 / USDA 110) protein is NAD-dependent protein deacetylase 2.